Here is a 239-residue protein sequence, read N- to C-terminus: Carboxy-S-adenosyl-L-methionine synthase (239 aa).

S-adenosyl-L-methionine is bound by residues Tyr-35, 64 to 66 (GSS), 114 to 115 (DL), Asn-129, and Arg-196.

This sequence belongs to the class I-like SAM-binding methyltransferase superfamily. Cx-SAM synthase family. Homodimer.

It catalyses the reaction prephenate + S-adenosyl-L-methionine = carboxy-S-adenosyl-L-methionine + 3-phenylpyruvate + H2O. Its function is as follows. Catalyzes the conversion of S-adenosyl-L-methionine (SAM) to carboxy-S-adenosyl-L-methionine (Cx-SAM). This chain is Carboxy-S-adenosyl-L-methionine synthase, found in Helicobacter hepaticus (strain ATCC 51449 / 3B1).